The following is a 145-amino-acid chain: Pseudoazurin (145 aa).

The first 22 residues, 1 to 22 (MFHHSLAAAAAALLALAAPGFA), serve as a signal peptide directing secretion. A Plastocyanin-like domain is found at 27 to 115 (VHMLNKGESG…MGMVGLVQVG (89 aa)). 4 residues coordinate Cu cation: H62, C100, H103, and M108. Residues 126–145 (TAKMPKKARERMDAELAQVN) form a disordered region.

As to quaternary structure, homodimer. Requires Cu cation as cofactor.

It localises to the periplasm. This soluble electron transfer copper protein is required for the inactivation of copper-containing nitrite reductase in the presence of oxygen. This chain is Pseudoazurin (pazS), found in Paracoccus pantotrophus (Thiosphaera pantotropha).